A 184-amino-acid chain; its full sequence is Peptidyl-tRNA hydrolase (184 aa).

Y14 provides a ligand contact to tRNA. The active-site Proton acceptor is the H19. Residues F60 and N62 each coordinate tRNA.

This sequence belongs to the PTH family. Monomer.

It is found in the cytoplasm. It catalyses the reaction an N-acyl-L-alpha-aminoacyl-tRNA + H2O = an N-acyl-L-amino acid + a tRNA + H(+). Functionally, hydrolyzes ribosome-free peptidyl-tRNAs (with 1 or more amino acids incorporated), which drop off the ribosome during protein synthesis, or as a result of ribosome stalling. Catalyzes the release of premature peptidyl moieties from peptidyl-tRNA molecules trapped in stalled 50S ribosomal subunits, and thus maintains levels of free tRNAs and 50S ribosomes. The chain is Peptidyl-tRNA hydrolase from Mesomycoplasma hyopneumoniae (strain 232) (Mycoplasma hyopneumoniae).